A 528-amino-acid polypeptide reads, in one-letter code: Glucans biosynthesis protein G 2 (528 aa).

The N-terminal stretch at 1-44 is a signal peptide; the sequence is MRLHLTFNHSTPATGRKNTKHTLFFGSMLACIISIISLVVPAYG.

This sequence belongs to the OpgD/OpgG family.

It localises to the periplasm. The protein operates within glycan metabolism; osmoregulated periplasmic glucan (OPG) biosynthesis. In terms of biological role, involved in the biosynthesis of osmoregulated periplasmic glucans (OPGs). The chain is Glucans biosynthesis protein G 2 (opgG2) from Shewanella oneidensis (strain ATCC 700550 / JCM 31522 / CIP 106686 / LMG 19005 / NCIMB 14063 / MR-1).